We begin with the raw amino-acid sequence, 296 residues long: Glutamate 5-kinase (296 aa).

K15 serves as a coordination point for ATP. Substrate-binding residues include S55, D159, and N186. ATP-binding positions include 206-207 and 248-254; these read SD and TGGIATK.

It belongs to the glutamate 5-kinase family.

The protein resides in the cytoplasm. It carries out the reaction L-glutamate + ATP = L-glutamyl 5-phosphate + ADP. The protein operates within amino-acid biosynthesis; L-proline biosynthesis; L-glutamate 5-semialdehyde from L-glutamate: step 1/2. Functionally, catalyzes the transfer of a phosphate group to glutamate to form L-glutamate 5-phosphate. The chain is Glutamate 5-kinase from Treponema pallidum (strain Nichols).